The primary structure comprises 208 residues: MVSRRVQALLDQLRAQGIQDEQVLNALAAVPREKFVDEAFEQKAWDNIALPIGQGQTISQPYMVARMTELLELTPQSRVLETGTGSGYQTAILAHLVQHVCSVERIKGLQWQARRRLKNLDLHNVSTRHGDGWQGWQARAPFDAIIVTAAPPEIPTALMTQLDEGGILVLPVGEEHQYLKRVRRRGGEFIIDTVEAVRFVPLVKGELA.

Residue serine 59 is part of the active site.

The protein belongs to the methyltransferase superfamily. L-isoaspartyl/D-aspartyl protein methyltransferase family. As to quaternary structure, monomer.

Its subcellular location is the cytoplasm. It catalyses the reaction [protein]-L-isoaspartate + S-adenosyl-L-methionine = [protein]-L-isoaspartate alpha-methyl ester + S-adenosyl-L-homocysteine. Functionally, catalyzes the methyl esterification of L-isoaspartyl residues in peptides and proteins that result from spontaneous decomposition of normal L-aspartyl and L-asparaginyl residues. It plays a role in the repair and/or degradation of damaged proteins. The polypeptide is Protein-L-isoaspartate O-methyltransferase (pcm) (Shigella flexneri).